A 75-amino-acid polypeptide reads, in one-letter code: Lipid-anchored plasma membrane protein CPP2 (75 aa).

Positions 1–43 (MSQQQGYYQQGPPQQGYYQQGPPQQGYYQQGPPQQGYPQQQPV) are disordered. A run of 3 repeats spans residues 4-13 (QQGYYQQGPP), 14-23 (QQGYYQQGPP), and 24-33 (QQGYYQQGPP). The interval 4–33 (QQGYYQQGPPQQGYYQQGPPQQGYYQQGPP) is 3 X 10 AA tandem repeats of Q-Q-G-Y-Y-Q-Q-G-P-P.

It belongs to the CYSTM1 family. In terms of processing, palmitoylated near the C-terminus.

It is found in the cell membrane. In Saccharomyces cerevisiae (strain ATCC 204508 / S288c) (Baker's yeast), this protein is Lipid-anchored plasma membrane protein CPP2.